A 631-amino-acid chain; its full sequence is Sphingomyelin phosphodiesterase (631 aa).

Positions 1–23 (MPRYGASLRQSCPRSGREQGQDG) are disordered. Residues 1-46 (MPRYGASLRQSCPRSGREQGQDGTAGAPGLLWMGLVLALALALALA) form the signal peptide. Positions 87–171 (GNLTCPICKG…LLGSTCGHWD (85 aa)) constitute a Saposin B-type domain. A glycan (N-linked (GlcNAc...) asparagine) is linked at N88. 3 disulfide bridges follow: C91–C167, C94–C159, and C122–C133. The N-linked (GlcNAc...) asparagine glycan is linked to N177. Zn(2+) contacts are provided by D208 and H210. Intrachain disulfides connect C223–C228 and C229–C252. The Zn(2+) site is built by D280 and N320. N-linked (GlcNAc...) asparagine glycosylation is found at N337 and N397. C387 and C433 are joined by a disulfide. Zn(2+) is bound by residues H427, H459, and H461. N-linked (GlcNAc...) asparagine glycosylation is present at N505. Position 510 is a phosphoserine; by PKC/PRKCD (S510). N522 carries N-linked (GlcNAc...) asparagine glycosylation. 2 disulfide bridges follow: C586-C590 and C596-C609.

This sequence belongs to the acid sphingomyelinase family. Monomer. Interacts with SORT1; the interaction is required for SMPD1 targeting to lysosomes. Zn(2+) serves as cofactor. In terms of processing, proteolytically processed. Mature lysosomal form arises from C-terminal proteolytic processing of pro-sphingomyelin phosphodiesterase. Post-translationally, this form is generated following cleavage by CASP7 in the extracellular milieu. It shows increased activity. Both lysosomal and secreted forms are glycosylated but they show a differential pattern of glycosylation. In terms of processing, phosphorylated at Ser-510 by PRKCD upon stress stimuli. Phosphorylation is required for secretion.

The protein resides in the lysosome. It is found in the lipid droplet. Its subcellular location is the secreted. The protein localises to the extracellular space. It catalyses the reaction a sphingomyelin + H2O = phosphocholine + an N-acylsphing-4-enine + H(+). It carries out the reaction N-(octadecanoyl)-sphing-4-enine-1-phosphocholine + H2O = N-octadecanoylsphing-4-enine + phosphocholine + H(+). The catalysed reaction is 1,2-dihexadecanoyl-sn-glycero-3-phosphocholine + H2O = 1,2-dihexadecanoyl-sn-glycerol + phosphocholine + H(+). The enzyme catalyses a 1,2-diacyl-sn-glycero-3-phosphocholine + H2O = phosphocholine + a 1,2-diacyl-sn-glycerol + H(+). With respect to regulation, hydrolysis of liposomal sphingomyelin is stimulated by incorporation of diacylglycerol (DAG), ceramide and free fatty acids into the liposomal membranes. Phosphatidylcholine hydrolysis is inhibited by incorporation of cholesterol, ceramide, DAG, monoacylglycerol and fatty acids. Antidepressants, namely amitriptyline, imipramine, desipramine, fluoxetine, sertraline, escitalopram, and maprotiline inhibit sphingomyelin phosphodiesterase activity. Its activity is regulated as follows. (Microbial infection) The secretory form is activated by P.aeruginosa, this activation results in the release of ceramide in the outer leaflet of the plasma membrane. (Microbial infection) The secretory form is activated by human coronavirus SARS-CoV-2, this activation results in the release of ceramide in the outer leaflet of the plasma membrane. Its function is as follows. Converts sphingomyelin to ceramide. Exists as two enzymatic forms that arise from alternative trafficking of a single protein precursor, one that is targeted to the endolysosomal compartment, whereas the other is released extracellularly. However, in response to various forms of stress, lysosomal exocytosis may represent a major source of the secretory form. Functionally, in the lysosomes, converts sphingomyelin to ceramide. Plays an important role in the export of cholesterol from the intraendolysosomal membranes. Also has phospholipase C activities toward 1,2-diacylglycerolphosphocholine and 1,2-diacylglycerolphosphoglycerol. Modulates stress-induced apoptosis through the production of ceramide. In terms of biological role, when secreted, modulates cell signaling with its ability to reorganize the plasma membrane by converting sphingomyelin to ceramide. Secreted form is increased in response to stress and inflammatory mediators such as IL1B, IFNG or TNF as well as upon infection with bacteria and viruses. Produces the release of ceramide in the outer leaflet of the plasma membrane playing a central role in host defense. Ceramide reorganizes these rafts into larger signaling platforms that are required to internalize P.aeruginosa, induce apoptosis and regulate the cytokine response in infected cells. In wounded cells, the lysosomal form is released extracellularly in the presence of Ca(2+) and promotes endocytosis and plasma membrane repair. This form is generated following cleavage by CASP7 in the extracellular milieu in response to bacterial infection. It shows increased ability to convert sphingomyelin to ceramide and promotes plasma membrane repair. Plasma membrane repair by ceramide counteracts the action of gasdermin-D (GSDMD) perforin (PRF1) pores that are formed in response to bacterial infection. Its function is as follows. (Microbial infection) Secretion is activated by bacteria such as P.aeruginosa, N.gonorrhoeae and others, this activation results in the release of ceramide in the outer leaflet of the plasma membrane which facilitates the infection. Functionally, (Microbial infection) Secretion is activated by human coronaviruses SARS-CoV and SARS-CoV-2 as well as Zaire ebolavirus, this activation results in the release of ceramide in the outer leaflet of the plasma membrane which facilitates the infection. In terms of biological role, lacks residues that bind the cofactor Zn(2+) and has no enzyme activity. The polypeptide is Sphingomyelin phosphodiesterase (Homo sapiens (Human)).